A 337-amino-acid chain; its full sequence is Beta-glucosidase-like protein NCA3, mitochondrial (337 aa).

The segment covering 57-67 has biased composition (low complexity); sequence ESAATTTTLSS. Residues 57–84 are disordered; sequence ESAATTTTLSSSEKDTSEQKRDGGFQDG. The segment covering 68-80 has biased composition (basic and acidic residues); it reads SEKDTSEQKRDGG.

This sequence belongs to the SUN family.

It is found in the mitochondrion. Functionally, involved in the mitochondrial expression of subunits 6 and 8 of the F0-F1 ATP synthase. This chain is Beta-glucosidase-like protein NCA3, mitochondrial (NCA3), found in Saccharomyces cerevisiae (strain ATCC 204508 / S288c) (Baker's yeast).